Consider the following 659-residue polypeptide: Hemocyanin subunit B (659 aa).

Residues 1-18 form the signal peptide; sequence MVAKWCVLAMCLLVAVGA. The Cu cation site is built by His198, His202, and His232. N-linked (GlcNAc...) asparagine glycosylation occurs at Asn318. The Cu cation site is built by His353, His357, and His393. A disulfide bridge links Cys562 with Cys609.

It belongs to the tyrosinase family. Hemocyanin subfamily. As to quaternary structure, 36-chain polymer consisting of 6 hexamers, each of which includes 4 different chains, A, B, C and D. As to expression, hemolymph.

The protein resides in the secreted. It localises to the extracellular space. Functionally, hemocyanins are copper-containing oxygen carriers occurring freely dissolved in the hemolymph of many mollusks and arthropods. The protein is Hemocyanin subunit B (HCB) of Scutigera coleoptrata (House centipede).